Reading from the N-terminus, the 562-residue chain is Alpha-1D adrenergic receptor (562 aa).

Over 1-90 (MTFRDILSVT…VGGLVVSAQG (90 aa)) the chain is Extracellular. Disordered stretches follow at residues 13-44 (GPRA…GVPG) and 50-69 (AVVG…EAGA). Over residues 21–44 (GGSGAGGGAGTVGPEGPAVGGVPG) the composition is skewed to gly residues. N-linked (GlcNAc...) asparagine glycans are attached at residues Asn-60 and Asn-76. The chain crosses the membrane as a helical span at residues 91–115 (VGVGVFLAAFILTAVAGNLLVILSV). Residues 116 to 127 (ACNRHLQTVTNY) are Cytoplasmic-facing. The helical transmembrane segment at 128–153 (FIVNLAVADLLLSAAVLPFSATMEVL) threads the bilayer. Over 154 to 163 (GFWPFGRTFC) the chain is Extracellular. A helical membrane pass occupies residues 164-186 (DVWAAVDVLCCTASILSLCTISV). The Cytoplasmic segment spans residues 187 to 207 (DRYVGVRHSLKYPAIMTERKA). The chain crosses the membrane as a helical span at residues 208 to 232 (AAILALLWAVALVVSVGPLLGWKEP). At 233–245 (VPPDERFCGITEE) the chain is on the extracellular side. The chain crosses the membrane as a helical span at residues 246-269 (VGYAIFSSVCSFYLPMAVIVVMYC). The Cytoplasmic segment spans residues 270–342 (RVYVVARSTT…KFSREKKAAK (73 aa)). A helical transmembrane segment spans residues 343–367 (TLAIVVGVFVLCWFPFFFVLPLGSL). Topologically, residues 368-374 (FPQLKPS) are extracellular. The chain crosses the membrane as a helical span at residues 375 to 399 (EGVFKVIFWLGYFNSCVNPLIYPCS). The Cytoplasmic portion of the chain corresponds to 400–562 (SREFKRAFLR…DLSNLRETDI (163 aa)). Cys-413 carries the S-palmitoyl cysteine lipid modification. The tract at residues 444-472 (QPAHRTPRGSPSPHCTPRPGLRRHAGGAG) is disordered.

It belongs to the G-protein coupled receptor 1 family. Adrenergic receptor subfamily. ADRA1D sub-subfamily. As to quaternary structure, interacts with FLNA (via filamin repeat 21); increases PKA-mediated phosphorylation of FLNA. In terms of processing, palmitoylated. Palmitoylation by ZDHHC21 may increase the expression of the receptor and regulate downstream signaling.

The protein localises to the cell membrane. Its function is as follows. This alpha-adrenergic receptor mediates its effect through the influx of extracellular calcium. This chain is Alpha-1D adrenergic receptor (Adra1d), found in Mus musculus (Mouse).